A 208-amino-acid polypeptide reads, in one-letter code: Uridine kinase (208 aa).

Gly12–Thr19 is an ATP binding site.

The protein belongs to the uridine kinase family.

It is found in the cytoplasm. It carries out the reaction uridine + ATP = UMP + ADP + H(+). The enzyme catalyses cytidine + ATP = CMP + ADP + H(+). Its pathway is pyrimidine metabolism; CTP biosynthesis via salvage pathway; CTP from cytidine: step 1/3. The protein operates within pyrimidine metabolism; UMP biosynthesis via salvage pathway; UMP from uridine: step 1/1. This is Uridine kinase from Streptococcus equi subsp. equi (strain 4047).